Reading from the N-terminus, the 170-residue chain is Putative 4-hydroxy-4-methyl-2-oxoglutarate aldolase (170 aa).

Substrate-binding positions include 85-88 (GDMI) and Arg107. Asp108 contributes to the a divalent metal cation binding site.

This sequence belongs to the class II aldolase/RraA-like family. In terms of assembly, homotrimer. A divalent metal cation is required as a cofactor.

The catalysed reaction is 4-hydroxy-4-methyl-2-oxoglutarate = 2 pyruvate. It catalyses the reaction oxaloacetate + H(+) = pyruvate + CO2. Catalyzes the aldol cleavage of 4-hydroxy-4-methyl-2-oxoglutarate (HMG) into 2 molecules of pyruvate. Also contains a secondary oxaloacetate (OAA) decarboxylase activity due to the common pyruvate enolate transition state formed following C-C bond cleavage in the retro-aldol and decarboxylation reactions. The protein is Putative 4-hydroxy-4-methyl-2-oxoglutarate aldolase of Acinetobacter baylyi (strain ATCC 33305 / BD413 / ADP1).